The primary structure comprises 163 residues: Pheromone-binding protein (163 aa).

Residues 1–21 form the signal peptide; sequence MLRKISLLLLPVFVAINLVHS. 3 cysteine pairs are disulfide-bonded: cysteine 40–cysteine 75, cysteine 71–cysteine 129, and cysteine 118–cysteine 138.

Belongs to the PBP/GOBP family. In terms of assembly, homodimer. Antenna.

This major soluble protein in olfactory sensilla of male moths might serve to solubilize the extremely hydrophobic pheromone molecules and to transport pheromone through the aqueous lymph to receptors located on olfactory cilia. This is Pheromone-binding protein from Antheraea polyphemus (Polyphemus moth).